Reading from the N-terminus, the 284-residue chain is Steroidogenic acute regulatory protein, mitochondrial (284 aa).

A mitochondrion-targeting transit peptide spans 1–62 (MFLATFKLCA…RRSSLLGSQL (62 aa)). Phosphoserine; by PKA occurs at positions 56 and 194. In terms of domain architecture, START spans 66–279 (LYSDQELSYI…LRKRLEASPA (214 aa)).

May interact with TSPO. In terms of tissue distribution, expressed within glia and neurons in discrete regions of the brain.

It localises to the mitochondrion. The enzyme catalyses cholesterol(in) = cholesterol(out). It functions in the pathway steroid metabolism; cholesterol metabolism. In terms of biological role, plays a key role in steroid hormone synthesis by enhancing the metabolism of cholesterol into pregnenolone. Transporter that binds to and transport cholesterol through the intermembrane space of the mitochondrion. This Mus musculus (Mouse) protein is Steroidogenic acute regulatory protein, mitochondrial (Star).